Reading from the N-terminus, the 205-residue chain is Holliday junction branch migration complex subunit RuvA (205 aa).

Positions 1–64 are domain I; sequence MIGKLKGTID…EDQLKLFGFL (64 aa). A domain II region spans residues 65-143; sequence SALEREWFRL…AFVGEMAPSI (79 aa). The segment at 144–153 is flexible linker; that stretch reads GLKQELGEGV. Positions 153 to 205 are domain III; that stretch reads VAAAPVSDAVSALTNLGYSRDQAANAVAAALKNGGEGADSARLIRLGLKELSR.

It belongs to the RuvA family. In terms of assembly, homotetramer. Forms an RuvA(8)-RuvB(12)-Holliday junction (HJ) complex. HJ DNA is sandwiched between 2 RuvA tetramers; dsDNA enters through RuvA and exits via RuvB. An RuvB hexamer assembles on each DNA strand where it exits the tetramer. Each RuvB hexamer is contacted by two RuvA subunits (via domain III) on 2 adjacent RuvB subunits; this complex drives branch migration. In the full resolvosome a probable DNA-RuvA(4)-RuvB(12)-RuvC(2) complex forms which resolves the HJ.

The protein localises to the cytoplasm. Its function is as follows. The RuvA-RuvB-RuvC complex processes Holliday junction (HJ) DNA during genetic recombination and DNA repair, while the RuvA-RuvB complex plays an important role in the rescue of blocked DNA replication forks via replication fork reversal (RFR). RuvA specifically binds to HJ cruciform DNA, conferring on it an open structure. The RuvB hexamer acts as an ATP-dependent pump, pulling dsDNA into and through the RuvAB complex. HJ branch migration allows RuvC to scan DNA until it finds its consensus sequence, where it cleaves and resolves the cruciform DNA. The sequence is that of Holliday junction branch migration complex subunit RuvA from Sinorhizobium medicae (strain WSM419) (Ensifer medicae).